The chain runs to 152 residues: uncharacterized protein (152 aa).

It belongs to the transposase 8 family.

This is an uncharacterized protein from Sinorhizobium fredii (strain NBRC 101917 / NGR234).